A 406-amino-acid chain; its full sequence is Tyrosine--tRNA ligase (406 aa).

Y35 provides a ligand contact to L-tyrosine. A 'HIGH' region motif is present at residues 40 to 49; the sequence is PTADSLHIGH. L-tyrosine is bound by residues Y168 and Q172. The 'KMSKS' region motif lies at 228 to 232; the sequence is KMGKT. K231 contacts ATP. One can recognise an S4 RNA-binding domain in the interval 340–406; it reads CSVVELLVDI…KKNYNRIIIK (67 aa).

It belongs to the class-I aminoacyl-tRNA synthetase family. TyrS type 1 subfamily. Homodimer.

It is found in the cytoplasm. The enzyme catalyses tRNA(Tyr) + L-tyrosine + ATP = L-tyrosyl-tRNA(Tyr) + AMP + diphosphate + H(+). In terms of biological role, catalyzes the attachment of tyrosine to tRNA(Tyr) in a two-step reaction: tyrosine is first activated by ATP to form Tyr-AMP and then transferred to the acceptor end of tRNA(Tyr). This Clostridium kluyveri (strain NBRC 12016) protein is Tyrosine--tRNA ligase.